The primary structure comprises 291 residues: ATP synthase gamma chain (291 aa).

Belongs to the ATPase gamma chain family. F-type ATPases have 2 components, CF(1) - the catalytic core - and CF(0) - the membrane proton channel. CF(1) has five subunits: alpha(3), beta(3), gamma(1), delta(1), epsilon(1). CF(0) has three main subunits: a, b and c.

Its subcellular location is the cell inner membrane. Its function is as follows. Produces ATP from ADP in the presence of a proton gradient across the membrane. The gamma chain is believed to be important in regulating ATPase activity and the flow of protons through the CF(0) complex. The polypeptide is ATP synthase gamma chain (Ralstonia nicotianae (strain ATCC BAA-1114 / GMI1000) (Ralstonia solanacearum)).